Consider the following 144-residue polypeptide: 3-hydroxyacyl-[acyl-carrier-protein] dehydratase FabZ (144 aa).

His-51 is an active-site residue.

It belongs to the thioester dehydratase family. FabZ subfamily.

It is found in the cytoplasm. The catalysed reaction is a (3R)-hydroxyacyl-[ACP] = a (2E)-enoyl-[ACP] + H2O. In terms of biological role, involved in unsaturated fatty acids biosynthesis. Catalyzes the dehydration of short chain beta-hydroxyacyl-ACPs and long chain saturated and unsaturated beta-hydroxyacyl-ACPs. In Clostridium botulinum (strain ATCC 19397 / Type A), this protein is 3-hydroxyacyl-[acyl-carrier-protein] dehydratase FabZ.